Reading from the N-terminus, the 166-residue chain is Ureidoglycolate lyase (166 aa).

The protein belongs to the ureidoglycolate lyase family. Homodimer. It depends on Ni(2+) as a cofactor.

The catalysed reaction is (S)-ureidoglycolate = urea + glyoxylate. Its pathway is nitrogen metabolism; (S)-allantoin degradation. Catalyzes the catabolism of the allantoin degradation intermediate (S)-ureidoglycolate, generating urea and glyoxylate. Involved in the utilization of allantoin as nitrogen source. The chain is Ureidoglycolate lyase from Agrobacterium fabrum (strain C58 / ATCC 33970) (Agrobacterium tumefaciens (strain C58)).